The following is a 278-amino-acid chain: Urease accessory protein UreD (278 aa).

Belongs to the UreD family. As to quaternary structure, ureD, UreF and UreG form a complex that acts as a GTP-hydrolysis-dependent molecular chaperone, activating the urease apoprotein by helping to assemble the nickel containing metallocenter of UreC. The UreE protein probably delivers the nickel.

The protein resides in the cytoplasm. Functionally, required for maturation of urease via the functional incorporation of the urease nickel metallocenter. The polypeptide is Urease accessory protein UreD (Staphylococcus aureus (strain bovine RF122 / ET3-1)).